The chain runs to 394 residues: MNNSNRLRLTWISYFSYALTGALVIVTGMVMGNIAEYFNLPIASMSNTFTFLNAGILISIFLNAWLMEIIPLKRQLVFGFILMLIAIAGLMVGHNLMIFSISMFILGVVSGITMSIGTFLITHMYEGRQRGSRLLFTDSFFSMAGMIFPVAAAILLARHIEWYWVYACIGLLYVGIFVLTLCSEFPVLGHKATDQSKPVAKEKWGMGVLFLAIAALCYILGQLGFIQWVPEYATKTFNMDISQAGQLVSNFWISYMIGMWVFSFILRFFDLQRIVTVLAALATLSMYMFVSTNNPEHLSYYILALGFVSSAIYTTLITLGSLQTKVSSPKLVNFILTCGTVGTMLTFVVTGPIVANSGVHAALATANGLYLTVFVMCLILGFFTKHRSHGHVTH.

12 helical membrane-spanning segments follow: residues 11–31 (WISY…GMVM), 51–71 (FLNA…EIIP), 76–96 (LVFG…GHNL), 101–121 (ISMF…TFLI), 134–154 (LLFT…AAAI), 162–182 (WYWV…LTLC), 206–226 (MGVL…LGFI), 246–266 (QLVS…SFIL), 274–294 (IVTV…STNN), 302–322 (ILAL…LGSL), 334–354 (FILT…GPIV), and 363–383 (LATA…LGFF).

Belongs to the major facilitator superfamily. TsgA family.

The protein localises to the cell inner membrane. The polypeptide is Protein TsgA homolog (Yersinia enterocolitica serotype O:8 / biotype 1B (strain NCTC 13174 / 8081)).